A 527-amino-acid polypeptide reads, in one-letter code: Bifunctional methyltransferase (527 aa).

Residues 1–309 (MQYSIKQVLS…GHSRVILFSP (309 aa)) are hemK. The interval 1–311 (MQYSIKQVLS…SRVILFSPIN (311 aa)) is RF MTase. Residues 149–153 (GTGSG), Asp-172, Trp-201, Asn-216, Glu-356, Glu-381, Asn-408, and Asp-430 each bind S-adenosyl-L-methionine. Substrate is bound at residue 216–219 (NPPY). A tRNA (guanine-N(7)-)-methyltransferase region spans residues 310–527 (INLNRSYARR…IILQHVSGDH (218 aa)). A tRNA MTase region spans residues 314–527 (RSYARRIGKS…IILQHVSGDH (214 aa)). Asp-430 is a catalytic residue. Residues Lys-434 and Asp-466 each contribute to the substrate site.

This sequence in the C-terminal section; belongs to the class I-like SAM-binding methyltransferase superfamily. TrmB family. In the N-terminal section; belongs to the protein N5-glutamine methyltransferase family. PrmC subfamily.

It catalyses the reaction L-glutaminyl-[peptide chain release factor] + S-adenosyl-L-methionine = N(5)-methyl-L-glutaminyl-[peptide chain release factor] + S-adenosyl-L-homocysteine + H(+). The enzyme catalyses guanosine(46) in tRNA + S-adenosyl-L-methionine = N(7)-methylguanosine(46) in tRNA + S-adenosyl-L-homocysteine. Methylates the class 1 translation termination release factors RF1/PrfA and RF2/PrfB on the glutamine residue of the universally conserved GGQ motif. Its function is as follows. Catalyzes the formation of N(7)-methylguanine at position 46 (m7G46) in tRNA. The sequence is that of Bifunctional methyltransferase (prmC/trmB) from Rickettsia felis (strain ATCC VR-1525 / URRWXCal2) (Rickettsia azadi).